Here is a 114-residue protein sequence, read N- to C-terminus: Cytochrome c2 (114 aa).

The residue at position 1 (Gln1) is a Pyrrolidone carboxylic acid. Residues Cys13, Cys16, His17, and Met93 each coordinate heme c.

This sequence belongs to the cytochrome c family. Binds 1 heme c group covalently per subunit.

Its subcellular location is the periplasm. In terms of biological role, cytochrome c2 is found mainly in purple, non-sulfur, photosynthetic bacteria where it functions as the electron donor to the oxidized bacteriochlorophyll in the photophosphorylation pathway. However, it may also have a role in the respiratory chain and is found in some non-photosynthetic bacteria. In Rhodopseudomonas palustris, this protein is Cytochrome c2.